The following is a 361-amino-acid chain: Chorismate synthase (361 aa).

NADP(+) is bound by residues Arg-48 and Arg-54. FMN contacts are provided by residues 125–127 (RSS), 238–239 (NA), Gly-278, 293–297 (KPTSS), and Arg-319.

Belongs to the chorismate synthase family. Homotetramer. Requires FMNH2 as cofactor.

The catalysed reaction is 5-O-(1-carboxyvinyl)-3-phosphoshikimate = chorismate + phosphate. Its pathway is metabolic intermediate biosynthesis; chorismate biosynthesis; chorismate from D-erythrose 4-phosphate and phosphoenolpyruvate: step 7/7. Functionally, catalyzes the anti-1,4-elimination of the C-3 phosphate and the C-6 proR hydrogen from 5-enolpyruvylshikimate-3-phosphate (EPSP) to yield chorismate, which is the branch point compound that serves as the starting substrate for the three terminal pathways of aromatic amino acid biosynthesis. This reaction introduces a second double bond into the aromatic ring system. The sequence is that of Chorismate synthase from Escherichia coli (strain SE11).